We begin with the raw amino-acid sequence, 663 residues long: Beta-galactosidase YesZ (663 aa).

A substrate-binding site is contributed by Arg107. Cys111 is a binding site for Zn(2+). A substrate-binding site is contributed by Asn145. Glu146 functions as the Proton donor in the catalytic mechanism. Cys154, Cys156, and Cys159 together coordinate Zn(2+). The Nucleophile role is filled by Glu297. 346-349 (EQPH) is a binding site for substrate.

Belongs to the glycosyl hydrolase 42 family. As to quaternary structure, homotrimer.

The enzyme catalyses Hydrolysis of terminal non-reducing beta-D-galactose residues in beta-D-galactosides.. May play a role in the degradation of rhamnogalacturonan derived from plant cell walls. In Bacillus licheniformis (strain ATCC 14580 / DSM 13 / JCM 2505 / CCUG 7422 / NBRC 12200 / NCIMB 9375 / NCTC 10341 / NRRL NRS-1264 / Gibson 46), this protein is Beta-galactosidase YesZ (yesZ).